Here is a 155-residue protein sequence, read N- to C-terminus: Putative pre-16S rRNA nuclease (155 aa).

The protein belongs to the YqgF nuclease family.

The protein localises to the cytoplasm. Its function is as follows. Could be a nuclease involved in processing of the 5'-end of pre-16S rRNA. This is Putative pre-16S rRNA nuclease from Wolbachia sp. subsp. Brugia malayi (strain TRS).